The chain runs to 159 residues: Protein E6 (159 aa).

2 zinc fingers span residues 35 to 71 and 108 to 144; these read CVYC…CGKC and CYIC…CMQC.

This sequence belongs to the papillomaviridae E6 protein family. As to quaternary structure, forms homodimers. Interacts with ubiquitin-protein ligase UBE3A/E6-AP; this interaction stimulates UBE3A ubiquitin activity. Interacts with host TP53 and EP300; this interaction inhibits TP53 activity.

Its subcellular location is the host cytoplasm. It localises to the host nucleus. In terms of biological role, plays a major role in the induction and maintenance of cellular transformation. E6 associates with host UBE3A/E6-AP ubiquitin-protein ligase and modulates its activity. Sequesters tumor suppressor TP53 in the host cytoplasm and modulates its activity by interacting with host EP300 that results in the reduction of TP53 acetylation and activation. In turn, apoptosis induced by DNA damage is inhibited. E6 also protects host keratinocytes from apoptosis by mediating the degradation of host BAK1. May also inhibit host immune response. The sequence is that of Protein E6 from Homo sapiens (Human).